Consider the following 65-residue polypeptide: Large ribosomal subunit protein uL29c (65 aa).

The protein belongs to the universal ribosomal protein uL29 family.

The protein localises to the plastid. It localises to the chloroplast. This chain is Large ribosomal subunit protein uL29c (rpl29), found in Guillardia theta (Cryptophyte).